A 552-amino-acid chain; its full sequence is MFS-type transporter atr4 (552 aa).

Positions 1–102 (MEDPKSLSAP…NIVDWDGPND (102 aa)) are disordered. The span at 16–27 (ADTTTADETPAA) shows a compositional bias: low complexity. 2 stretches are compositionally biased toward polar residues: residues 38–47 (KAGSESSENT) and 71–80 (LRNSSVSRSN). Residue Asn-73 is glycosylated (N-linked (GlcNAc...) asparagine). The next 6 membrane-spanning stretches (helical) occupy residues 118–138 (IFLV…LATG), 153–173 (LGSL…LVIA), 182–202 (MPLY…CALG), 214–234 (LQGC…SDLI), 244–264 (GIYA…GGFL), and 272–292 (WLMW…FVVM). A glycan (N-linked (GlcNAc...) asparagine) is linked at Asn-314. 6 consecutive transmembrane segments (helical) span residues 346–366 (PIIF…YLLF), 385–405 (GLVY…FGVF), 425–445 (LLPM…YGWS), 452–472 (WIVP…TLVC), 498–518 (VVGA…GIGW), and 521–541 (SLLA…YVYG).

The protein belongs to the major facilitator superfamily.

The protein localises to the cell membrane. In terms of biological role, MFS-type transporter; part of the gene cluster that mediates the biosynthesis of atranorin, a depside of polyketide origin that accumulates in the cortical or medullary layers of lichen thalli. This chain is MFS-type transporter atr4, found in Stereocaulon alpinum (Alpine snow lichen).